The chain runs to 214 residues: Probable transaldolase (214 aa).

Lysine 83 acts as the Schiff-base intermediate with substrate in catalysis.

Belongs to the transaldolase family. Type 3B subfamily.

The protein resides in the cytoplasm. The enzyme catalyses D-sedoheptulose 7-phosphate + D-glyceraldehyde 3-phosphate = D-erythrose 4-phosphate + beta-D-fructose 6-phosphate. It functions in the pathway carbohydrate degradation; pentose phosphate pathway; D-glyceraldehyde 3-phosphate and beta-D-fructose 6-phosphate from D-ribose 5-phosphate and D-xylulose 5-phosphate (non-oxidative stage): step 2/3. In terms of biological role, transaldolase is important for the balance of metabolites in the pentose-phosphate pathway. The chain is Probable transaldolase from Clostridium tetani (strain Massachusetts / E88).